The chain runs to 172 residues: AIG2-like protein B (172 aa).

Residue 15–20 coordinates substrate; it reads YGSFQE. Catalysis depends on glutamate 83, which acts as the Proton acceptor. Residues 146 to 165 are compositionally biased toward basic and acidic residues; sequence KRNPQGKGRDDFSNVLKEED. The interval 146-172 is disordered; sequence KRNPQGKGRDDFSNVLKEEDPANAPSS.

This sequence belongs to the gamma-glutamylcyclotransferase family. Expressed in flowerss, leaves, stems, seeds and roots.

The protein localises to the cell membrane. Putative gamma-glutamylcyclotransferase. The protein is AIG2-like protein B of Arabidopsis thaliana (Mouse-ear cress).